Consider the following 196-residue polypeptide: MSWPYATPGIPDEEFIRAEGVPMTKAEIRALALSKLRLIKGGTLVDVGCGTGTISVEAALIMGEGSKVYAIDKDPLAVEITKKNAAKFGVGDRLIVAEGDALELLPKLPRSNRYFLGGGGRELPMLFQTALELAGTGGVIVADVITLESLRLALDFLENAGVKYEIAQVYIARGRRLGGYTILSPLNPVYIITAYA.

Residues T24, 48-52, D72, and A101 contribute to the S-adenosyl-L-methionine site; that span reads GCGTG.

It belongs to the methyltransferase superfamily. Archaeal-type CbiT family.

The enzyme catalyses Co-precorrin-6B + S-adenosyl-L-methionine = Co-precorrin-7 + S-adenosyl-L-homocysteine + CO2. Its pathway is cofactor biosynthesis; adenosylcobalamin biosynthesis; cob(II)yrinate a,c-diamide from sirohydrochlorin (anaerobic route): step 8/10. Functionally, catalyzes the methylation of C-15 in cobalt-precorrin-6B followed by the decarboxylation of C-12 to form cobalt-precorrin-7. This chain is Probable cobalt-precorrin-6B C(15)-methyltransferase (decarboxylating), found in Pyrobaculum aerophilum (strain ATCC 51768 / DSM 7523 / JCM 9630 / CIP 104966 / NBRC 100827 / IM2).